The sequence spans 331 residues: Olfactory receptor 7D11 (331 aa).

Topologically, residues 1-25 (MEIENHTLITKFLILGLSDDPELQP) are extracellular. A glycan (N-linked (GlcNAc...) asparagine) is linked at asparagine 5. The helical transmembrane segment at 26 to 46 (ILFGLFLSMYLVTLLGNLLII) threads the bilayer. Topologically, residues 47–57 (LAVSSDSHLHK) are cytoplasmic. A helical membrane pass occupies residues 58–78 (PMYFLLSNLSFIDICFISTTI). At 79–97 (PKMLVNMQSQIKDISYIEC) the chain is on the extracellular side. A disulfide bridge connects residues cysteine 97 and cysteine 179. The helical transmembrane segment at 98-118 (LTQVFFFNIFAGMDNFLLTLM) threads the bilayer. Topologically, residues 119–142 (AYDRFVAICHPLNYTVIMNPRLCA) are cytoplasmic. Residues 143-163 (LLILMFWIIMFWVSLIHVLLM) form a helical membrane-spanning segment. Residues 164–196 (NELNFSRGTEIPHFFCELAQVLKVSNSDNHVNN) are Extracellular-facing. Asparagine 167 is a glycosylation site (N-linked (GlcNAc...) asparagine). Residues 197–217 (VFMYVVTSLLGVIPMTGILMS) form a helical membrane-spanning segment. Residues 218 to 244 (YSQIFSSLFRMSSTVSKYKAFSTCGSH) are Cytoplasmic-facing. A helical transmembrane segment spans residues 245–265 (LCVVTLFYGSGFGVYFSSSVV). Topologically, residues 266 to 271 (HSTQRR) are extracellular. The chain crosses the membrane as a helical span at residues 272-292 (KVASLMYTVISPMLNPFIYTL). Residues 293 to 331 (RNKDVKGALGKLFNRVASSPSCINDIRNKLLLRSVRQIL) lie on the Cytoplasmic side of the membrane.

The protein belongs to the G-protein coupled receptor 1 family.

The protein localises to the cell membrane. Functionally, possible olfactory or taste receptor. This chain is Olfactory receptor 7D11, found in Mus musculus (Mouse).